We begin with the raw amino-acid sequence, 383 residues long: MEAFPTEYFLGTAVRLLENVKYRDSNYTREERVENLQYAYNKAAAHFAQERQQQILKVSPKRLEASLRTIVGMVVYSWAKVSKELMADLSIHYTYTLILDDSEDDPHPQMLTYFDDLQSGNPQKHPWWMLVNEHFPNVLRHFGPFCSLNLIRSTLDFFEGCWIEQYNFHGFPGSFDYPGFLRRMNGLGHCVGGSLWPKENFNEQEHFLEITSAIAQMENWMVWVNDLMSFYKEFDDPRDQTSLVKNYVVSEGITLNQALEKLTQDTLQSSEQMMVVFSQKDPKIMDTIECFMHGYITWHLCDNRYRLKEIYDRTKDIQTEDAMKFRKFYEQAFKVGAIEATEWAYPTVVERLEQRKAEEQAERDEQAALANPEKAQVAQVVLA.

The protein belongs to the trichodiene synthase family.

The catalysed reaction is (2E,6E)-farnesyl diphosphate = trichodiene + diphosphate. It participates in sesquiterpene biosynthesis; trichothecene biosynthesis. Its function is as follows. TS is a member of the terpene cyclase group of enzymes. It catalyzes the isomerization and cyclization of farnesyl pyro-phosphate to form trichodiene, the first cyclic intermediate in the biosynthetic pathway for trichothecenes. It serves to branch trichothecene biosynthesis from the isoprenoid pathway. This is Trichodiene synthase (TRI5) from Stachybotrys chartarum (Toxic black mold).